Reading from the N-terminus, the 192-residue chain is MTAIWIAIAALSALALAFGLVLGYASRRFEVENDPIVEEVEAMLPQSQCGQCGYPGCRPYAEAVSLNGESINKCGPGGEAMMLKLAEKLNVDPQPLEGDADIQAPARHVAWIDESNCIGCTKCIQACPVDAIIGSTKAVHTVVSDLCTGCDLCISPCPTDCIELRPIAPTPANWKWDLDTIPVRVIQVERHA.

Residues 1–26 form a hydrophobic region; sequence MTAIWIAIAALSALALAFGLVLGYAS. One can recognise a 4Fe-4S domain in the interval 32–91; it reads ENDPIVEEVEAMLPQSQCGQCGYPGCRPYAEAVSLNGESINKCGPGGEAMMLKLAEKLNV. The [4Fe-4S] cluster site is built by C49, C52, C57, C74, C117, C120, C123, C127, C147, C150, C153, and C157. 4Fe-4S ferredoxin-type domains follow at residues 108–137 and 138–167; these read HVAWIDESNCIGCTKCIQACPVDAIIGSTK and AVHTVVSDLCTGCDLCISPCPTDCIELRPI.

The protein belongs to the 4Fe4S bacterial-type ferredoxin family. RnfB subfamily. The complex is composed of six subunits: RnfA, RnfB, RnfC, RnfD, RnfE and RnfG. Requires [4Fe-4S] cluster as cofactor.

It localises to the cell inner membrane. In terms of biological role, part of a membrane-bound complex that couples electron transfer with translocation of ions across the membrane. The protein is Ion-translocating oxidoreductase complex subunit B of Pectobacterium atrosepticum (strain SCRI 1043 / ATCC BAA-672) (Erwinia carotovora subsp. atroseptica).